Here is a 461-residue protein sequence, read N- to C-terminus: Putative cytochrome P450 132 (461 aa).

Cysteine 409 is a binding site for heme.

This sequence belongs to the cytochrome P450 family. Heme serves as cofactor.

This Mycobacterium tuberculosis (strain ATCC 25618 / H37Rv) protein is Putative cytochrome P450 132 (cyp132).